Reading from the N-terminus, the 109-residue chain is Class I hydrophobin 7 (109 aa).

The signal sequence occupies residues 1 to 17; sequence MFAQSFIITALAALAVA. 4 cysteine pairs are disulfide-bonded: Cys-28–Cys-88, Cys-35–Cys-82, Cys-36–Cys-69, and Cys-89–Cys-102.

The protein belongs to the fungal hydrophobin family. In terms of assembly, self-assembles to form functional amyloid fibrils called rodlets. Self-assembly into fibrillar rodlets occurs spontaneously at hydrophobic:hydrophilic interfaces and the rodlets further associate laterally to form amphipathic monolayers.

It is found in the secreted. It localises to the cell wall. Its function is as follows. Aerial growth, conidiation, and dispersal of filamentous fungi in the environment rely upon a capability of their secreting small amphipathic proteins called hydrophobins (HPBs) with low sequence identity. Class I can self-assemble into an outermost layer of rodlet bundles on aerial cell surfaces, conferring cellular hydrophobicity that supports fungal growth, development and dispersal; whereas Class II form highly ordered films at water-air interfaces through intermolecular interactions but contribute nothing to the rodlet structure. Hydph7 is a class I hydrophobin involved in fruiting body development. In Pleurotus ostreatus (strain PC15) (Oyster mushroom), this protein is Class I hydrophobin 7.